We begin with the raw amino-acid sequence, 385 residues long: Queuine tRNA-ribosyltransferase (385 aa).

The active-site Proton acceptor is the Asp-92. Substrate is bound by residues 92–96 (DSGGF), Asp-146, Gln-188, and Gly-215. Residues 246–252 (GVGHPED) form an RNA binding region. The active-site Nucleophile is the Asp-265. The segment at 270–274 (TRTGR) is RNA binding; important for wobble base 34 recognition. Zn(2+) is bound by residues Cys-303, Cys-305, Cys-308, and His-334.

The protein belongs to the queuine tRNA-ribosyltransferase family. Homodimer. Within each dimer, one monomer is responsible for RNA recognition and catalysis, while the other monomer binds to the replacement base PreQ1. It depends on Zn(2+) as a cofactor.

The catalysed reaction is 7-aminomethyl-7-carbaguanine + guanosine(34) in tRNA = 7-aminomethyl-7-carbaguanosine(34) in tRNA + guanine. It participates in tRNA modification; tRNA-queuosine biosynthesis. Catalyzes the base-exchange of a guanine (G) residue with the queuine precursor 7-aminomethyl-7-deazaguanine (PreQ1) at position 34 (anticodon wobble position) in tRNAs with GU(N) anticodons (tRNA-Asp, -Asn, -His and -Tyr). Catalysis occurs through a double-displacement mechanism. The nucleophile active site attacks the C1' of nucleotide 34 to detach the guanine base from the RNA, forming a covalent enzyme-RNA intermediate. The proton acceptor active site deprotonates the incoming PreQ1, allowing a nucleophilic attack on the C1' of the ribose to form the product. After dissociation, two additional enzymatic reactions on the tRNA convert PreQ1 to queuine (Q), resulting in the hypermodified nucleoside queuosine (7-(((4,5-cis-dihydroxy-2-cyclopenten-1-yl)amino)methyl)-7-deazaguanosine). The sequence is that of Queuine tRNA-ribosyltransferase from Thermus thermophilus (strain ATCC 27634 / DSM 579 / HB8).